The sequence spans 492 residues: BTB/POZ domain and ankyrin repeat-containing protein NOOT2 (492 aa).

The BTB domain occupies 25–107 (SDVTFQVEGR…LYSGQVSIVP (83 aa)). The C2HC NPR-type zinc finger occupies 113–127 (RPNCGERGCWHTHCT). The Zn(2+) site is built by cysteine 116, cysteine 121, histidine 123, and cysteine 126. ANK repeat units lie at residues 248–277 (QKIRRMRRALDSSDVELVKLMVMGEGLNLD), 278–307 (EALALHYAVENCSREVVKALLELGAADVNY), 312–341 (AGKTSLHVAAEMVSPEMVAVLLDHHADPTV), and 345–379 (DGVTPLDILRTLTSDFLFKGAVPGLNHIEPNKLRL). 2 disordered regions span residues 395-439 (ENNA…NSIG) and 455-492 (TQMGGDDDNRHNNSHREAMNRQGGHGCDPSMYHHSHDF). Composition is skewed to low complexity over residues 397 to 413 (NASNNNNNNNNASSSAA) and 425 to 439 (SSSSGNNNNNNNSIG). The span at 461 to 473 (DDNRHNNSHREAM) shows a compositional bias: basic and acidic residues.

It belongs to the plant 'ANKYRIN-BTB/POZ' family. 'NOOT-BOP-COCH-like' (NBCL) subfamily. As to quaternary structure, homodimer.

The protein resides in the nucleus. The protein localises to the cytoplasm. It is found in the cell membrane. Its pathway is protein modification; protein ubiquitination. Its function is as follows. May act as a substrate-specific adapter of an E3 ubiquitin-protein ligase complex (CUL3-RBX1-BTB) which mediates the ubiquitination and subsequent proteasomal degradation of target proteins. Transcriptional co-regulator involved in the promotion of leaf and floral meristem fate and determinacy. Required for the abscission of senescent organs, probably by regulating the cell wall disorganization in abscission zones (AZs, e.g. pulvini at the base of leaves). Involved in the coordination of the symbiotic nodule developmental program; promotes the formation of root nodules by interacting directly with APP1 to modulate the expression of the nuclear transcription factor Y subunit (NF-YA1), a key nodulin. Involved in the regulation of indeterminate nodule identity in association with NOOT1. This chain is BTB/POZ domain and ankyrin repeat-containing protein NOOT2, found in Medicago truncatula (Barrel medic).